We begin with the raw amino-acid sequence, 689 residues long: Glycine--tRNA ligase beta subunit (689 aa).

The protein belongs to the class-II aminoacyl-tRNA synthetase family. As to quaternary structure, tetramer of two alpha and two beta subunits.

It is found in the cytoplasm. The catalysed reaction is tRNA(Gly) + glycine + ATP = glycyl-tRNA(Gly) + AMP + diphosphate. This Salmonella typhi protein is Glycine--tRNA ligase beta subunit.